A 172-amino-acid chain; its full sequence is Putative B3 domain-containing protein At1g05615 (172 aa).

Positions 69–169 form a DNA-binding region, TF-B3; that stretch reads VDEGKIIDFE…NLAMVPLTPT (101 aa).

The protein resides in the nucleus. This is Putative B3 domain-containing protein At1g05615 from Arabidopsis thaliana (Mouse-ear cress).